Reading from the N-terminus, the 1202-residue chain is Putative late blight resistance protein homolog R1B-8 (1202 aa).

2 coiled-coil regions span residues 345-368 (RYSD…ESLQ) and 437-459 (LRMN…RLLN). One can recognise an NB-ARC domain in the interval 426–741 (IARTSSQLAR…ISESFIKSCE (316 aa)). An ATP-binding site is contributed by 471-478 (GMPGLGKT). 7 LRR repeats span residues 865–889 (FKFL…LFYL), 908–936 (LWNL…VWDM), 1011–1036 (PIRL…ISAP), 1040–1059 (YLKL…TADH), 1060–1084 (LKHL…VSNG), 1086–1111 (FPQL…VFPN), and 1128–1151 (SCFM…VVQS).

This sequence belongs to the disease resistance NB-LRR family.

It localises to the cytoplasm. It is found in the membrane. Functionally, confers resistance to late blight (Phytophthora infestans) races carrying the avirulence gene Avr1. Resistance proteins guard the plant against pathogens that contain an appropriate avirulence protein via an indirect interaction with this avirulence protein. That triggers a defense system including the hypersensitive response, which restricts the pathogen growth. The sequence is that of Putative late blight resistance protein homolog R1B-8 (R1B-8) from Solanum demissum (Wild potato).